Reading from the N-terminus, the 426-residue chain is MYVLKNGQVLNASGELENKDVLIQNGKVNLIADSIEVTSGEEFDATGKLIAPGFIDVHVHLREPGGEHKETILTGTQAAARGGYTTICSMPNTKPVPDSKEVMESLQAKIKETAKVRVLPYASITTSLGTDELVDFEALKEAGAFAFTDDGVGVQLAGTMYEAMKRAAALDMAIVAHCEDNSLIYGGVVHDGIFAEKEGLKGIPNIAESVQIARDVLLAEAAGCHYHVCHISTKESVRVVRDAKRAGIRVTAEVSPHHLILDEEAIPGNDGNWKMNPPLRSKEDRAALLEGLLDGTIDFIATDHAPHAAEEKNVPMEQAAFGIVGLETAFPLLYTHFVKTNEWTLKQLIDWMTVKPAECFKLPYGKLEEGSVADIVVLDLEKEANIDPATFYSKGKNTPFVGETCIGWPVATFSEGTLVYNEGEIK.

Residues His-58 and His-60 each contribute to the Zn(2+) site. Substrate is bound by residues 60–62 and Asn-92; that span reads HLR. The Zn(2+) site is built by Asp-150, His-177, and His-230. Position 276 (Asn-276) interacts with substrate. Asp-303 provides a ligand contact to Zn(2+). Residue Asp-303 is part of the active site. Substrate is bound by residues His-307 and 321–322; that span reads FG.

It belongs to the metallo-dependent hydrolases superfamily. DHOase family. Class I DHOase subfamily. It depends on Zn(2+) as a cofactor.

The enzyme catalyses (S)-dihydroorotate + H2O = N-carbamoyl-L-aspartate + H(+). The protein operates within pyrimidine metabolism; UMP biosynthesis via de novo pathway; (S)-dihydroorotate from bicarbonate: step 3/3. Its function is as follows. Catalyzes the reversible cyclization of carbamoyl aspartate to dihydroorotate. This Listeria monocytogenes serotype 4b (strain F2365) protein is Dihydroorotase.